The chain runs to 495 residues: Transcription termination/antitermination protein NusA (495 aa).

Residues 135 to 200 (GEIITGVVKK…RGAQLFVTRS (66 aa)) form the S1 motif domain. Positions 302-368 (KHTMDIAVEA…FTKYLDIDED (67 aa)) constitute a KH domain. A run of 2 repeats spans residues 364–414 (DIDE…KNAL) and 439–489 (GVDR…RNIC). Residues 364–489 (DIDEDFATVL…ALIMAARNIC (126 aa)) form a 2 X 51 AA approximate repeats region.

Belongs to the NusA family. In terms of assembly, monomer. Binds directly to the core enzyme of the DNA-dependent RNA polymerase and to nascent RNA.

The protein localises to the cytoplasm. Its function is as follows. Participates in both transcription termination and antitermination. The polypeptide is Transcription termination/antitermination protein NusA (Shigella flexneri).